We begin with the raw amino-acid sequence, 229 residues long: Homeobox-leucine zipper protein HOX3 (229 aa).

A disordered region spans residues 1-82 (MMGATSPSGL…GPHRPKKLRL (82 aa)). Residues 52-68 (GEEEEFPMGSVEEDEEE) are compositionally biased toward acidic residues. Residues 75-134 (HRPKKLRLSKEQSRLLEESFRLNHTLTPKQKEALAIKLKLRPRQVEVWFQNRRARTKLKQ) constitute a DNA-binding region (homeobox). A leucine-zipper region spans residues 133–177 (KQTEMECEYLKRCFGSLTEENRRLQREVEELRAMRVAPPTVLSPH). Residues 198 to 229 (AATGPPAVRPPPSSAAAAAPSPFHPRRPSAAF) are disordered.

It belongs to the HD-ZIP homeobox family. Class II subfamily. Homodimer. May form a heterodimer with HOX1, HOX2 or HOX7. As to expression, expressed in seedlings, roots, leaves, nodes, internodes, flowers and embryo.

It is found in the nucleus. Its function is as follows. Probable transcription repressor that binds to the DNA sequence 5'-CAAT[GC]ATTG-3'. This is Homeobox-leucine zipper protein HOX3 (HOX3) from Oryza sativa subsp. indica (Rice).